The following is a 168-amino-acid chain: Endoribonuclease YbeY (168 aa).

Residues histidine 127, histidine 131, and histidine 137 each contribute to the Zn(2+) site.

This sequence belongs to the endoribonuclease YbeY family. Requires Zn(2+) as cofactor.

The protein resides in the cytoplasm. Single strand-specific metallo-endoribonuclease involved in late-stage 70S ribosome quality control and in maturation of the 3' terminus of the 16S rRNA. In Chromobacterium violaceum (strain ATCC 12472 / DSM 30191 / JCM 1249 / CCUG 213 / NBRC 12614 / NCIMB 9131 / NCTC 9757 / MK), this protein is Endoribonuclease YbeY.